A 248-amino-acid polypeptide reads, in one-letter code: Probable transcriptional regulatory protein P9303_05381 (248 aa).

It belongs to the TACO1 family.

The protein resides in the cytoplasm. The chain is Probable transcriptional regulatory protein P9303_05381 from Prochlorococcus marinus (strain MIT 9303).